The following is a 130-amino-acid chain: MSMQDPIADMLTRIRNGQAANHVSVKMPSAKLKVAIAKLLKDEGYIADYAVADEAKPELEVTLKYFQGQPVVETIQRVSRPGLRIYKGKNELPKVMGGLGVAIVSTSKGLMTDRAARLAGMGGEVICYVA.

Belongs to the universal ribosomal protein uS8 family. Part of the 30S ribosomal subunit. Contacts proteins S5 and S12.

In terms of biological role, one of the primary rRNA binding proteins, it binds directly to 16S rRNA central domain where it helps coordinate assembly of the platform of the 30S subunit. The sequence is that of Small ribosomal subunit protein uS8 from Shewanella baltica (strain OS223).